Consider the following 469-residue polypeptide: ATP synthase subunit beta (469 aa).

156-163 (GGAGVGKT) serves as a coordination point for ATP.

It belongs to the ATPase alpha/beta chains family. As to quaternary structure, F-type ATPases have 2 components, CF(1) - the catalytic core - and CF(0) - the membrane proton channel. CF(1) has five subunits: alpha(3), beta(3), gamma(1), delta(1), epsilon(1). CF(0) has three main subunits: a(1), b(2) and c(9-12). The alpha and beta chains form an alternating ring which encloses part of the gamma chain. CF(1) is attached to CF(0) by a central stalk formed by the gamma and epsilon chains, while a peripheral stalk is formed by the delta and b chains.

The protein resides in the cell membrane. The enzyme catalyses ATP + H2O + 4 H(+)(in) = ADP + phosphate + 5 H(+)(out). Produces ATP from ADP in the presence of a proton gradient across the membrane. The catalytic sites are hosted primarily by the beta subunits. The chain is ATP synthase subunit beta from Lactococcus lactis subsp. lactis (strain IL1403) (Streptococcus lactis).